The sequence spans 673 residues: Synaptotagmin-like protein 4 (673 aa).

One can recognise a RabBD domain in the interval Ile-4 to Gln-122. The FYVE-type zinc-finger motif lies at Cys-63–Cys-105. The interval Phe-184 to Asp-253 is disordered. Ser-202, Ser-205, Ser-218, Ser-222, and Ser-275 each carry phosphoserine. The C2 1 domain occupies Val-358–Leu-480. A Phosphoserine modification is found at Ser-490. The 127-residue stretch at Pro-509–Met-635 folds into the C2 2 domain.

As to quaternary structure, part of a ternary complex containing STX1A and RAB27A. Can bind both dominant negative and dominant active mutants of RAB27A. Binds STXBP1, RAB3A, RAB8A and RAB27B. Interacts with MYO5A. In terms of tissue distribution, detected in the pancreatic islet, in particular in insulin-positive beta cells, and in pituitary.

It localises to the membrane. The protein resides in the cytoplasmic vesicle. The protein localises to the secretory vesicle membrane. Its function is as follows. Modulates exocytosis of dense-core granules and secretion of hormones in the pancreas and the pituitary. Interacts with vesicles containing negatively charged phospholipids in a Ca(2+)-independent manner. The sequence is that of Synaptotagmin-like protein 4 (Sytl4) from Mus musculus (Mouse).